Here is a 61-residue protein sequence, read N- to C-terminus: Alpha-conotoxin PnIB (61 aa).

The signal sequence occupies residues 1 to 21; sequence MGMRMMFTVFLLVVLATTVVS. Positions 22–44 are excised as a propeptide; the sequence is FTSDRASDDGNAAASDLIALTIK. 2 disulfides stabilise this stretch: cysteine 46–cysteine 52 and cysteine 47–cysteine 60. The tract at residues 48–50 is ser-Xaa-Pro motif, crucial for potent interaction with nAChR; the sequence is SLP. Tyrosine 59 is subject to Sulfotyrosine. A Cysteine amide modification is found at cysteine 60.

Belongs to the conotoxin A superfamily. Expressed by the venom duct.

The protein resides in the secreted. Functionally, alpha-conotoxins act on postsynaptic membranes, they bind to the nicotinic acetylcholine receptors (nAChR) and thus inhibit them. This toxin blocks mammalian nAChRs (alpha-7/CHRNA7 &gt; alpha-3-beta-2/CHRNA3-CHRNB2). This is Alpha-conotoxin PnIB from Conus pennaceus (Feathered cone).